Consider the following 122-residue polypeptide: Small ribosomal subunit protein uS13 (122 aa).

Over residues 95–116 the composition is skewed to basic residues; it reads GLPCRGQKTKTNARTRKGKKKT. The segment at 95-122 is disordered; the sequence is GLPCRGQKTKTNARTRKGKKKTVGAATK.

It belongs to the universal ribosomal protein uS13 family. In terms of assembly, part of the 30S ribosomal subunit. Forms a loose heterodimer with protein S19. Forms two bridges to the 50S subunit in the 70S ribosome.

Its function is as follows. Located at the top of the head of the 30S subunit, it contacts several helices of the 16S rRNA. In the 70S ribosome it contacts the 23S rRNA (bridge B1a) and protein L5 of the 50S subunit (bridge B1b), connecting the 2 subunits; these bridges are implicated in subunit movement. Contacts the tRNAs in the A and P-sites. The polypeptide is Small ribosomal subunit protein uS13 (Aliarcobacter butzleri (strain RM4018) (Arcobacter butzleri)).